A 90-amino-acid polypeptide reads, in one-letter code: Cell division topological specificity factor (90 aa).

This sequence belongs to the MinE family.

In terms of biological role, prevents the cell division inhibition by proteins MinC and MinD at internal division sites while permitting inhibition at polar sites. This ensures cell division at the proper site by restricting the formation of a division septum at the midpoint of the long axis of the cell. In Clostridium perfringens (strain ATCC 13124 / DSM 756 / JCM 1290 / NCIMB 6125 / NCTC 8237 / Type A), this protein is Cell division topological specificity factor.